The chain runs to 434 residues: UPF0597 protein CLB_1949 (434 aa).

The protein belongs to the UPF0597 family.

This is UPF0597 protein CLB_1949 from Clostridium botulinum (strain ATCC 19397 / Type A).